Consider the following 153-residue polypeptide: Ribosome maturation factor RimP (153 aa).

This sequence belongs to the RimP family.

It localises to the cytoplasm. Required for maturation of 30S ribosomal subunits. This chain is Ribosome maturation factor RimP, found in Synechococcus elongatus (strain ATCC 33912 / PCC 7942 / FACHB-805) (Anacystis nidulans R2).